The primary structure comprises 208 residues: T-cell surface glycoprotein CD8 beta chain (208 aa).

The N-terminal stretch at 1 to 21 (MQPWLWLVFSVKLSALWGSSA) is a signal peptide. An Ig-like V-type domain is found at 22-131 (LLQTPSSLLV…MVVFGTGTKL (110 aa)). Over 22–168 (LLQTPSSLLV…KTQKGLTCGL (147 aa)) the chain is Extracellular. N-linked (GlcNAc...) asparagine glycans are attached at residues asparagine 34, asparagine 88, and asparagine 94. A disulfide bond links cysteine 41 and cysteine 115. Residues 169 to 189 (ITLSLLVACILVLLVSLSVAI) traverse the membrane as a helical segment. Over 190-208 (HFHCMRRRARIHFMKQFHK) the chain is Cytoplasmic.

As to quaternary structure, forms disulfide-linked heterodimers with CD8A at the cell surface. Interacts with CD3D; this interaction couples TCR-CD3 with CD8. Interacts with LCK. Post-translationally, phosphorylated as a consequence of T-cell activation. Palmitoylated at the cytoplasmic tail and thereby targets the heterodimer CD8A/CD8B to lipid rafts unlike CD8A homodimers.

It localises to the cell membrane. Its function is as follows. Integral membrane glycoprotein that plays an essential role in the immune response and serves multiple functions in responses against both external and internal offenses. In T-cells, functions primarily as a coreceptor for MHC class I molecule:peptide complex. The antigens presented by class I peptides are derived from cytosolic proteins while class II derived from extracellular proteins. Interacts simultaneously with the T-cell receptor (TCR) and the MHC class I proteins presented by antigen presenting cells (APCs). In turn, recruits the Src kinase LCK to the vicinity of the TCR-CD3 complex. A palmitoylation site in the cytoplasmic tail of CD8B chain contributes to partitioning of CD8 into the plasma membrane lipid rafts where signaling proteins are enriched. Once LCK recruited, it initiates different intracellular signaling pathways by phosphorylating various substrates ultimately leading to lymphokine production, motility, adhesion and activation of cytotoxic T-lymphocytes (CTLs). Additionally, plays a critical role in thymic selection of CD8+ T-cells. This Rattus norvegicus (Rat) protein is T-cell surface glycoprotein CD8 beta chain (Cd8b).